We begin with the raw amino-acid sequence, 250 residues long: F-box only protein 17 (250 aa).

Residues 15–62 enclose the F-box domain; that stretch reads HMALAELPPELLLQVLSHVPPRALVTRCRPVCRAWRDLVDGPSVWLLQ. Residues 99–250 enclose the FBA domain; that stretch reads FCLLAPLGRN…GLLQGLSRLH (152 aa).

As to quaternary structure, part of a SCF (SKP1-cullin-F-box) protein ligase complex. Interacts with SKP1 and CUL1.

In terms of biological role, substrate-recognition component of the SCF (SKP1-CUL1-F-box protein)-type E3 ubiquitin ligase complex. Able to recognize and bind denatured glycoproteins, which are modified with complex-type oligosaccharides. Also recognizes sulfated glycans. Does not bind high-mannose glycoproteins. This chain is F-box only protein 17 (Fbxo17), found in Rattus norvegicus (Rat).